Here is a 473-residue protein sequence, read N- to C-terminus: Photosystem II CP43 reaction center protein (473 aa).

A propeptide spanning residues 1–14 (MKTLYSLRRSYPVE) is cleaved from the precursor. Thr-15 bears the N-acetylthreonine mark. Phosphothreonine is present on Thr-15. 5 helical membrane-spanning segments follow: residues 69–93 (LFEV…PHLA), 134–155 (LIGP…KDRN), 178–200 (KALY…RKIT), 255–275 (KPFA…LSYS), and 291–312 (WFNN…ASQA). Residue Glu-367 participates in [CaMn4O5] cluster binding. A helical transmembrane segment spans residues 447-471 (RARAAAAGFEKGIDRDFEPVLSMTP).

This sequence belongs to the PsbB/PsbC family. PsbC subfamily. In terms of assembly, PSII is composed of 1 copy each of membrane proteins PsbA, PsbB, PsbC, PsbD, PsbE, PsbF, PsbH, PsbI, PsbJ, PsbK, PsbL, PsbM, PsbT, PsbX, PsbY, PsbZ, Psb30/Ycf12, at least 3 peripheral proteins of the oxygen-evolving complex and a large number of cofactors. It forms dimeric complexes. Binds multiple chlorophylls and provides some of the ligands for the Ca-4Mn-5O cluster of the oxygen-evolving complex. It may also provide a ligand for a Cl- that is required for oxygen evolution. PSII binds additional chlorophylls, carotenoids and specific lipids. is required as a cofactor.

The protein resides in the plastid. Its subcellular location is the chloroplast thylakoid membrane. Its function is as follows. One of the components of the core complex of photosystem II (PSII). It binds chlorophyll and helps catalyze the primary light-induced photochemical processes of PSII. PSII is a light-driven water:plastoquinone oxidoreductase, using light energy to abstract electrons from H(2)O, generating O(2) and a proton gradient subsequently used for ATP formation. In Pinus koraiensis (Korean pine), this protein is Photosystem II CP43 reaction center protein.